Consider the following 303-residue polypeptide: Magainins (303 aa).

A signal peptide spans 1 to 18; the sequence is MFKGLFICSLIAVICANA. 13 propeptides span residues 19–26, 33–36, 62–72, 79–82, 108–118, 125–128, 154–164, 171–174, 200–210, 217–220, 246–256, 263–266, and 292–303; these read LPQPEASA, REVR, DAEAVGPEAFA, and DAEAVDDRRWVE.

The protein belongs to the gastrin/cholecystokinin family. Magainin subfamily. In terms of tissue distribution, synthesized in the stomach and stored in a novel granular multinucleated cell in the gastric mucosa. It is stored as active, processed peptides in large granules within the granular gland secretions of the skin.

The protein localises to the secreted. Antimicrobial peptides that inhibit the growth of numerous species of bacteria and fungi and induce osmotic lysis of protozoa. Rapidly inactivates channel catfish herpesvirus (ED(50)=48 uM) over a wide temperature range. Magainins are membrane lytic agents. This Xenopus laevis (African clawed frog) protein is Magainins (magainins).